We begin with the raw amino-acid sequence, 632 residues long: Bestrophin homolog 24 (632 aa).

Transmembrane regions (helical) follow at residues 28 to 48 (IWKA…ILSV), 83 to 103 (GFFV…IGFI), 234 to 254 (IMYP…CLLA), and 271 to 291 (LYFP…MKVA). Disordered regions lie at residues 491–516 (LSNK…EHPF) and 562–632 (ETEV…TKFE). The segment covering 563–602 (TEVKRDEKKKKEEELREEGDNGKEEKDNKEDKKEEQDRPS) has biased composition (basic and acidic residues). The segment covering 623 to 632 (PHLRPPTKFE) has biased composition (basic residues).

The protein belongs to the anion channel-forming bestrophin (TC 1.A.46) family. Calcium-sensitive chloride channel subfamily. Forms oligomers.

The protein resides in the cell membrane. Functionally, forms chloride channels. The sequence is that of Bestrophin homolog 24 (best-24) from Caenorhabditis elegans.